The chain runs to 397 residues: B3 domain-containing protein At4g34400 (397 aa).

Positions Pro14–Tyr107 form a DNA-binding region, TF-B3. The tract at residues Glu118–Thr255 is disordered. Basic and acidic residues predominate over residues Thr137–Val160. 3 stretches are compositionally biased toward acidic residues: residues Val161 to Asp186, Ser212 to Tyr227, and Asp235 to Ser246.

The protein resides in the nucleus. This Arabidopsis thaliana (Mouse-ear cress) protein is B3 domain-containing protein At4g34400.